A 402-amino-acid polypeptide reads, in one-letter code: Propionate kinase (402 aa).

Residues N11 and K18 each contribute to the ATP site. A Mg(2+)-binding site is contributed by N11. R86 contributes to the substrate binding site. Catalysis depends on D143, which acts as the Proton donor/acceptor. ATP-binding positions include H175, 203-207 (HLGNG), 278-280 (DLR), and 326-330 (GIGEN).

Belongs to the acetokinase family. TdcD subfamily. Homodimer. Mg(2+) is required as a cofactor.

It catalyses the reaction propanoate + ATP = propanoyl phosphate + ADP. Its pathway is amino-acid degradation; L-threonine degradation via propanoate pathway; propanoate from L-threonine: step 4/4. In terms of biological role, catalyzes the conversion of propionyl phosphate and ADP to propionate and ATP. This Citrobacter koseri (strain ATCC BAA-895 / CDC 4225-83 / SGSC4696) protein is Propionate kinase.